Consider the following 464-residue polypeptide: Mitogen-activated protein kinase 10 (464 aa).

In terms of domain architecture, Protein kinase spans 64–359 (YQNLKPIGSG…VDDALQHPYI (296 aa)). ATP-binding positions include 70–78 (IGSGAQGIV) and Lys-93. Asp-189 serves as the catalytic Proton acceptor. Thr-221 carries the post-translational modification Phosphothreonine; by MAP2K7. A TXY motif is present at residues 221–223 (TPY). Tyr-223 is subject to Phosphotyrosine; by MAP2K4. Positions 405 to 464 (TKNGVVKGQPSPSGAAVNSSESLPPSSSVNDISSMSTDQTLASDTDSSLEASAGPLGCCR) are disordered. Residues 423–432 (SSESLPPSSS) are compositionally biased toward low complexity. Polar residues predominate over residues 433–454 (VNDISSMSTDQTLASDTDSSLE). S-palmitoyl cysteine attachment occurs at residues Cys-462 and Cys-463.

This sequence belongs to the protein kinase superfamily. CMGC Ser/Thr protein kinase family. MAP kinase subfamily. In terms of assembly, interacts with MAPK8IP1/JIP-1 and MAPK8IP3/JIP-3/JSAP1. Interacts with SPAG9/MAPK8IP4/JIP4. Interacts with HDAC9 and MAPKBP1. Interacts with ARRB2; the interaction enhances MAPK10 activation by MAP3K5. Interacts with SARM1. Interacts with JUND; interaction is inhibited in the presence of MEN1. The cofactor is Mg(2+). Post-translationally, dually phosphorylated on Thr-221 and Tyr-223 by MAP2K4 and MAP2K7, which activates the enzyme. MAP2K7 shows a strong preference for Thr-221 while MAP2K4 phosphorylates Tyr-223 preferentially. Weakly autophosphorylated on threonine and tyrosine residues in vitro. Palmitoylation regulates subcellular location and axonal development.

The protein localises to the cytoplasm. It is found in the membrane. Its subcellular location is the nucleus. The protein resides in the mitochondrion. The catalysed reaction is L-seryl-[protein] + ATP = O-phospho-L-seryl-[protein] + ADP + H(+). The enzyme catalyses L-threonyl-[protein] + ATP = O-phospho-L-threonyl-[protein] + ADP + H(+). Its activity is regulated as follows. Activated by threonine and tyrosine phosphorylation by two dual specificity kinases, MAP2K4 and MAP2K7. MAP2K7 phosphorylates MAPK10 on Thr-221 causing a conformational change and a large increase in Vmax for the enzyme. MAP2K4 then phosphorylates Tyr-223 resulting in a further increase in Vmax. Inhibited by dual specificity phosphatases, such as DUSP1. Inhibited by HDAC9. Functionally, serine/threonine-protein kinase involved in various processes such as neuronal proliferation, differentiation, migration and programmed cell death. Extracellular stimuli such as pro-inflammatory cytokines or physical stress stimulate the stress-activated protein kinase/c-Jun N-terminal kinase (SAP/JNK) signaling pathway. In this cascade, two dual specificity kinases MAP2K4/MKK4 and MAP2K7/MKK7 phosphorylate and activate MAPK10/JNK3. In turn, MAPK10/JNK3 phosphorylates a number of transcription factors, primarily components of AP-1 such as JUN and ATF2 and thus regulates AP-1 transcriptional activity. Plays regulatory roles in the signaling pathways during neuronal apoptosis. Phosphorylates the neuronal microtubule regulator STMN2. Acts in the regulation of the amyloid-beta precursor protein/APP signaling during neuronal differentiation by phosphorylating APP. Also participates in neurite growth in spiral ganglion neurons. Phosphorylates the CLOCK-BMAL1 heterodimer and plays a role in the photic regulation of the circadian clock. Phosphorylates JUND and this phosphorylation is inhibited in the presence of MEN1. The polypeptide is Mitogen-activated protein kinase 10 (Mapk10) (Rattus norvegicus (Rat)).